The chain runs to 392 residues: MPSFPRTVMLLGSGELGKEVAIAAQRLGCRVIACDRYAGAPAMQVADVAEVLPMTDADALLEVVRRHQPDVVIPEIEALAVHALAELEQEGITVIPTARATAVTMNRDRIRDLAAGELNLRTARFAYASSAEELKAVAEPLGWPVVVKPVMSSSGKGQSVVDCADDLPKAWEAAMAGARGTSTQVIVEEFLHFDLEITLLTIRQRNGETLFCAPIGHEQEGGDYQCSWQPAQLTDQQLHQAQAMAKTVTDNLGGAGLFGVEFFLCDDEVIFSELSPRPHDTGLVTLISQNLSEFELHLRAVLGLPIPAITAADAAASRVILAQTNMDSVAFEGVEQALTEADTQVLLFGKPTARPGRRMGVALARGVDRKEAQAKADRAAACVSVIPGSTAG.

N(1)-(5-phospho-beta-D-ribosyl)glycinamide contacts are provided by residues Glu-15–Leu-16 and Glu-75. ATP contacts are provided by residues Arg-107, Lys-148, Ser-153–Gln-158, Glu-188–Leu-191, and Glu-196. In terms of domain architecture, ATP-grasp spans Asp-112–Leu-302. Mg(2+) is bound by residues Glu-261 and Glu-273. N(1)-(5-phospho-beta-D-ribosyl)glycinamide-binding positions include Asp-280, Lys-350, and Arg-357–Arg-358.

This sequence belongs to the PurK/PurT family. As to quaternary structure, homodimer.

The catalysed reaction is N(1)-(5-phospho-beta-D-ribosyl)glycinamide + formate + ATP = N(2)-formyl-N(1)-(5-phospho-beta-D-ribosyl)glycinamide + ADP + phosphate + H(+). It functions in the pathway purine metabolism; IMP biosynthesis via de novo pathway; N(2)-formyl-N(1)-(5-phospho-D-ribosyl)glycinamide from N(1)-(5-phospho-D-ribosyl)glycinamide (formate route): step 1/1. Functionally, involved in the de novo purine biosynthesis. Catalyzes the transfer of formate to 5-phospho-ribosyl-glycinamide (GAR), producing 5-phospho-ribosyl-N-formylglycinamide (FGAR). Formate is provided by PurU via hydrolysis of 10-formyl-tetrahydrofolate. The protein is Formate-dependent phosphoribosylglycinamide formyltransferase of Synechococcus sp. (strain CC9605).